Reading from the N-terminus, the 793-residue chain is Signal transducer and activator of transcription 5A (793 aa).

Tyr90 is modified (phosphotyrosine). Residue Ser128 is modified to Phosphoserine. The SH2 domain occupies 589-686 (WNDGAILGFV…EVFAKYYTPV (98 aa)). Tyr682 and Tyr694 each carry phosphotyrosine. A Phosphoserine modification is found at Ser779.

The protein belongs to the transcription factor STAT family. As to quaternary structure, forms a homodimer or a heterodimer with a related family member. Interacts with NCOA1 and SOCS7. Binds NR3C1. Interacts with ERBB4. Interacts with EBF4. Interacts with CD69. ISGylated. Post-translationally, tyrosine phosphorylated in response to KITLG/SCF, IL2, IL3, IL7, IL15, CSF2/GMCSF, GH1, PRL, EPO and THPO. Activated KIT promotes phosphorylation on tyrosine residues and subsequent translocation to the nucleus. Tyrosine phosphorylated in response to constitutively activated FGFR1, FGFR2, FGFR3 and FGFR4. Tyrosine phosphorylation is required for DNA-binding activity and dimerization. Serine phosphorylation is also required for maximal transcriptional activity. Tyrosine phosphorylated in response to signaling via activated FLT3; wild-type FLT3 results in much weaker phosphorylation than constitutively activated mutant FLT3. Alternatively, can be phosphorylated by JAK2 at Tyr-694. As to expression, in the virgin, found in most tissues except brain and muscle. During lactation, abundantly found in mammary tissue, as well as in other secretory organs such as salivary gland and seminal vesicle.

It localises to the cytoplasm. The protein localises to the nucleus. Functionally, carries out a dual function: signal transduction and activation of transcription. Mediates cellular responses to the cytokine KITLG/SCF and other growth factors. May mediate cellular responses to activated FGFR1, FGFR2, FGFR3 and FGFR4. Binds to the GAS element and activates PRL-induced transcription. Regulates the expression of milk proteins during lactation. The sequence is that of Signal transducer and activator of transcription 5A (Stat5a) from Mus musculus (Mouse).